We begin with the raw amino-acid sequence, 177 residues long: Peptidyl-tRNA hydrolase (177 aa).

Y14 is a tRNA binding site. The active-site Proton acceptor is H19. Positions 64, 66, and 112 each coordinate tRNA.

The protein belongs to the PTH family. In terms of assembly, monomer.

It is found in the cytoplasm. The enzyme catalyses an N-acyl-L-alpha-aminoacyl-tRNA + H2O = an N-acyl-L-amino acid + a tRNA + H(+). Functionally, hydrolyzes ribosome-free peptidyl-tRNAs (with 1 or more amino acids incorporated), which drop off the ribosome during protein synthesis, or as a result of ribosome stalling. Its function is as follows. Catalyzes the release of premature peptidyl moieties from peptidyl-tRNA molecules trapped in stalled 50S ribosomal subunits, and thus maintains levels of free tRNAs and 50S ribosomes. The sequence is that of Peptidyl-tRNA hydrolase from Latilactobacillus sakei (Lactobacillus sakei).